The following is a 1173-amino-acid chain: WASH complex subunit 4 (1173 aa).

Residue Ala-2 is modified to N-acetylalanine. A Phosphoserine modification is found at Ser-7. The tract at residues 705–1173 is sufficient for interaction with WASHC5; sequence KDLALFFSLN…STVSADPVVK (469 aa). Residues 1135–1161 are a coiled coil; the sequence is RADKTAAEENQEKKEKEEETKTSNGDL. The span at 1142-1155 shows a compositional bias: basic and acidic residues; it reads EENQEKKEKEEETK. The disordered stretch occupies residues 1142–1173; sequence EENQEKKEKEEETKTSNGDLSDSTVSADPVVK. Position 1154 is a phosphothreonine (Thr-1154). Positions 1157–1167 are enriched in polar residues; sequence SNGDLSDSTVS.

This sequence belongs to the SWIP family. As to quaternary structure, component of the WASH core complex also described as WASH regulatory complex (SHRC) composed of WASH (WASHC1, WASH2P or WASH3P), WASHC2 (WASHC2A or WASHC2C), WASHC3, WASHC4 and WASHC5. The WASH core complex associates via WASHC2 with the F-actin-capping protein dimer (formed by CAPZA1, CAPZA2 or CAPZA3 and CAPZB) in a transient or substoichiometric manner which was initially described as WASH complex.

It localises to the early endosome. In terms of biological role, acts as a component of the WASH core complex that functions as a nucleation-promoting factor (NPF) at the surface of endosomes, where it recruits and activates the Arp2/3 complex to induce actin polymerization, playing a key role in the fission of tubules that serve as transport intermediates during endosome sorting. This Homo sapiens (Human) protein is WASH complex subunit 4.